A 362-amino-acid polypeptide reads, in one-letter code: Phosphoserine aminotransferase (362 aa).

L-glutamate contacts are provided by Ser9 and Arg42. Residues 76–77 (GR), Trp102, Thr153, Asp174, and Gln197 contribute to the pyridoxal 5'-phosphate site. Residue Lys198 is modified to N6-(pyridoxal phosphate)lysine. 239 to 240 (NT) contacts pyridoxal 5'-phosphate.

This sequence belongs to the class-V pyridoxal-phosphate-dependent aminotransferase family. SerC subfamily. Homodimer. Requires pyridoxal 5'-phosphate as cofactor.

Its subcellular location is the cytoplasm. It catalyses the reaction O-phospho-L-serine + 2-oxoglutarate = 3-phosphooxypyruvate + L-glutamate. It carries out the reaction 4-(phosphooxy)-L-threonine + 2-oxoglutarate = (R)-3-hydroxy-2-oxo-4-phosphooxybutanoate + L-glutamate. The protein operates within amino-acid biosynthesis; L-serine biosynthesis; L-serine from 3-phospho-D-glycerate: step 2/3. Its pathway is cofactor biosynthesis; pyridoxine 5'-phosphate biosynthesis; pyridoxine 5'-phosphate from D-erythrose 4-phosphate: step 3/5. In terms of biological role, catalyzes the reversible conversion of 3-phosphohydroxypyruvate to phosphoserine and of 3-hydroxy-2-oxo-4-phosphonooxybutanoate to phosphohydroxythreonine. The polypeptide is Phosphoserine aminotransferase (Shigella dysenteriae serotype 1 (strain Sd197)).